We begin with the raw amino-acid sequence, 172 residues long: Small ribosomal subunit protein uS4 (172 aa).

Residues 104-168 form the S4 RNA-binding domain; it reads RRLQTIVYRK…SPLAKMAQGG (65 aa).

Belongs to the universal ribosomal protein uS4 family. As to quaternary structure, part of the 30S ribosomal subunit. Contacts protein S5. The interaction surface between S4 and S5 is involved in control of translational fidelity.

Functionally, one of the primary rRNA binding proteins, it binds directly to 16S rRNA where it nucleates assembly of the body of the 30S subunit. In terms of biological role, with S5 and S12 plays an important role in translational accuracy. In Thermofilum pendens (strain DSM 2475 / Hrk 5), this protein is Small ribosomal subunit protein uS4.